We begin with the raw amino-acid sequence, 227 residues long: Cytidylate kinase (227 aa).

12 to 20 (GPSGAGKGT) contributes to the ATP binding site.

It belongs to the cytidylate kinase family. Type 1 subfamily.

The protein resides in the cytoplasm. The catalysed reaction is CMP + ATP = CDP + ADP. It catalyses the reaction dCMP + ATP = dCDP + ADP. The chain is Cytidylate kinase from Citrobacter koseri (strain ATCC BAA-895 / CDC 4225-83 / SGSC4696).